The sequence spans 130 residues: P antigen family member 5 (130 aa).

Disordered regions lie at residues methionine 1 to glutamate 88 and aspartate 101 to leucine 130. The span at threonine 14–threonine 26 shows a compositional bias: basic and acidic residues. Positions arginine 27–proline 42 are enriched in polar residues. Residues threonine 113 and threonine 116 each carry the phosphothreonine modification.

The protein belongs to the GAGE family.

This chain is P antigen family member 5 (PAGE5), found in Homo sapiens (Human).